Consider the following 301-residue polypeptide: 33 kDa chaperonin (301 aa).

2 disulfide bridges follow: C244–C246 and C277–C280.

The protein belongs to the HSP33 family. Post-translationally, under oxidizing conditions two disulfide bonds are formed involving the reactive cysteines. Under reducing conditions zinc is bound to the reactive cysteines and the protein is inactive.

It is found in the cytoplasm. Functionally, redox regulated molecular chaperone. Protects both thermally unfolding and oxidatively damaged proteins from irreversible aggregation. Plays an important role in the bacterial defense system toward oxidative stress. The sequence is that of 33 kDa chaperonin from Geobacter sulfurreducens (strain ATCC 51573 / DSM 12127 / PCA).